Here is a 380-residue protein sequence, read N- to C-terminus: Queuine tRNA-ribosyltransferase (380 aa).

Residue aspartate 96 is the Proton acceptor of the active site. Residues 96 to 100, aspartate 150, glutamine 193, and glycine 220 each bind substrate; that span reads DSGGF. The tract at residues 251 to 257 is RNA binding; sequence GVGAPDS. Aspartate 270 functions as the Nucleophile in the catalytic mechanism. The RNA binding; important for wobble base 34 recognition stretch occupies residues 275-279; it reads TRIAR. Zn(2+)-binding residues include cysteine 308, cysteine 310, cysteine 313, and histidine 339.

Belongs to the queuine tRNA-ribosyltransferase family. As to quaternary structure, homodimer. Within each dimer, one monomer is responsible for RNA recognition and catalysis, while the other monomer binds to the replacement base PreQ1. It depends on Zn(2+) as a cofactor.

The catalysed reaction is 7-aminomethyl-7-carbaguanine + guanosine(34) in tRNA = 7-aminomethyl-7-carbaguanosine(34) in tRNA + guanine. It functions in the pathway tRNA modification; tRNA-queuosine biosynthesis. Functionally, catalyzes the base-exchange of a guanine (G) residue with the queuine precursor 7-aminomethyl-7-deazaguanine (PreQ1) at position 34 (anticodon wobble position) in tRNAs with GU(N) anticodons (tRNA-Asp, -Asn, -His and -Tyr). Catalysis occurs through a double-displacement mechanism. The nucleophile active site attacks the C1' of nucleotide 34 to detach the guanine base from the RNA, forming a covalent enzyme-RNA intermediate. The proton acceptor active site deprotonates the incoming PreQ1, allowing a nucleophilic attack on the C1' of the ribose to form the product. After dissociation, two additional enzymatic reactions on the tRNA convert PreQ1 to queuine (Q), resulting in the hypermodified nucleoside queuosine (7-(((4,5-cis-dihydroxy-2-cyclopenten-1-yl)amino)methyl)-7-deazaguanosine). The sequence is that of Queuine tRNA-ribosyltransferase from Streptococcus gordonii (strain Challis / ATCC 35105 / BCRC 15272 / CH1 / DL1 / V288).